The sequence spans 107 residues: UPF0060 membrane protein mll7841 (107 aa).

4 helical membrane passes run 4–24 (LFYT…WAWW), 30–50 (PLWL…LALV), 60–80 (AAYG…VEGV), and 87–107 (LAGA…PRGA).

This sequence belongs to the UPF0060 family.

The protein resides in the cell inner membrane. This is UPF0060 membrane protein mll7841 from Mesorhizobium japonicum (strain LMG 29417 / CECT 9101 / MAFF 303099) (Mesorhizobium loti (strain MAFF 303099)).